Consider the following 316-residue polypeptide: B3 domain-containing protein Os04g0581400 (316 aa).

Residues 1-100 (MEFATTSSRF…GSGGGGGGED (100 aa)) form a disordered region. The span at 13 to 36 (EEEEEEEGEQEMEQEQDEEEEEAE) shows a compositional bias: acidic residues. The segment covering 46–77 (TSAAAAATASSSSPTSVSPSATASAAASTSAS) has biased composition (low complexity). A compositionally biased stretch (gly residues) spans 88 to 98 (GASGSGGGGGG). A DNA-binding region (TF-B3) is located at residues 110–215 (FDKVVTPSDV…RLFIDWKRRA (106 aa)). The segment at 239-290 (GGAGASSCRPRRPPRSTSITAFARASTSATSTPLCRRGSSSSSAPQGRGFIS) is disordered. Low complexity predominate over residues 253–270 (RSTSITAFARASTSATST).

It localises to the nucleus. The protein is B3 domain-containing protein Os04g0581400 of Oryza sativa subsp. japonica (Rice).